We begin with the raw amino-acid sequence, 499 residues long: Endoglucanase (499 aa).

The first 29 residues, 1–29 (MKRSISIFITCLLITLLTMGGMLASPASA), serve as a signal peptide directing secretion. Residues His65, 69 to 70 (WY), Tyr96, and His131 each bind substrate. The active-site Proton donor is the Glu169. Residue Tyr231 participates in substrate binding. The active-site Nucleophile is Glu257. Substrate-binding positions include 263-264 (AS), Trp291, and 296-298 (KQE). The 150-residue stretch at 350–499 (QENGISVQYR…GKLIWGTEPN (150 aa)) folds into the CBM3 domain.

This sequence belongs to the glycosyl hydrolase 5 (cellulase A) family.

The catalysed reaction is Endohydrolysis of (1-&gt;4)-beta-D-glucosidic linkages in cellulose, lichenin and cereal beta-D-glucans.. This Bacillus subtilis protein is Endoglucanase (bglC).